The primary structure comprises 816 residues: Sucrose synthase 1 (816 aa).

Residues 280–757 (MVFNVVIMSP…GLQRIEEKYT (478 aa)) form a GT-B glycosyltransferase region.

Belongs to the glycosyltransferase 1 family. Plant sucrose synthase subfamily. As to quaternary structure, homotetramer or heterotetramer with SUS2. In terms of tissue distribution, expressed in root phloem and leaf mesophyll. Expressed in phloem tissues and aleurone layers of seeds and at lower levels in the pericarp and endosperm cells (at protein level). Predominantly expressed in elongating tissues including roots, developing leaves and internodes.

The catalysed reaction is an NDP-alpha-D-glucose + D-fructose = a ribonucleoside 5'-diphosphate + sucrose + H(+). Sucrose-cleaving enzyme that provides UDP-glucose and fructose for various metabolic pathways. The sequence is that of Sucrose synthase 1 (SUS1) from Oryza sativa subsp. japonica (Rice).